The sequence spans 465 residues: Purple acid phosphatase 2 (465 aa).

A signal peptide spans 1-32 (MGASRTGCYLLAVVLAAVMNAAIAGITSSFIR). N-linked (GlcNAc...) asparagine glycosylation is found at asparagine 110 and asparagine 138. Aspartate 164 is a Fe cation binding site. The N-linked (GlcNAc...) asparagine glycan is linked to asparagine 172. Fe cation contacts are provided by aspartate 193 and tyrosine 196. Aspartate 193 contributes to the Mn(2+) binding site. Asparagine 230 lines the Mn(2+) pocket. Asparagine 230 lines the substrate pocket. An N-linked (GlcNAc...) asparagine glycan is attached at asparagine 303. Position 315 (histidine 315) interacts with Mn(2+). The active-site Proton donor is histidine 325. Histidine 352 is a Mn(2+) binding site. Residue 352–354 (HVH) participates in substrate binding. Fe cation is bound at residue histidine 354. Residues asparagine 400 and asparagine 425 are each glycosylated (N-linked (GlcNAc...) asparagine).

It belongs to the metallophosphoesterase superfamily. Purple acid phosphatase family. In terms of assembly, homodimer; disulfide-linked. Requires Fe cation as cofactor. Mn(2+) serves as cofactor. It depends on Zn(2+) as a cofactor. Cu(2+) is required as a cofactor. The cofactor is Mg(2+).

It is found in the secreted. It carries out the reaction a phosphate monoester + H2O = an alcohol + phosphate. The chain is Purple acid phosphatase 2 (PAP2) from Ipomoea batatas (Sweet potato).